Consider the following 287-residue polypeptide: Energy-coupling factor transporter ATP-binding protein EcfA2 (287 aa).

One can recognise an ABC transporter domain in the interval 3–246 (VKFSQVSYVY…TNYVNQLHLD (244 aa)). 40-47 (GQTGSGKS) contacts ATP.

Belongs to the ABC transporter superfamily. Energy-coupling factor EcfA family. As to quaternary structure, forms a stable energy-coupling factor (ECF) transporter complex composed of 2 membrane-embedded substrate-binding proteins (S component), 2 ATP-binding proteins (A component) and 2 transmembrane proteins (T component).

The protein resides in the cell membrane. ATP-binding (A) component of a common energy-coupling factor (ECF) ABC-transporter complex. Unlike classic ABC transporters this ECF transporter provides the energy necessary to transport a number of different substrates. This chain is Energy-coupling factor transporter ATP-binding protein EcfA2, found in Staphylococcus saprophyticus subsp. saprophyticus (strain ATCC 15305 / DSM 20229 / NCIMB 8711 / NCTC 7292 / S-41).